The following is a 1099-amino-acid chain: Protein transport protein Sec24A (1099 aa).

Disordered stretches follow at residues 1–36 (MSQPGIPASGGSSTGLQAQNGAASASGSPYTNGPVQ), 65–139 (KTLN…LPGA), and 279–317 (SQPTTKNPTMSRSVGYSYPSLPPGYQNTAPPSTTGAGLP). 5 stretches are compositionally biased toward polar residues: residues 10–20 (GGSSTGLQAQN), 68–90 (NPVSGQSNSGGSQTVSPLSNYQG), 108–126 (SLHSGPSPQMPLPTSQNPA), 279–292 (SQPTTKNPTMSRSV), and 303–317 (YQNTAPPSTTGAGLP). Residues C437, C440, C458, and C461 each contribute to the Zn(2+) site. The tract at residues 437–461 (CRSCRTYINPFVSFLDQRRWKCNLC) is zinc finger-like. Residues 972 to 1044 (PQPPILQLSV…TPESARTIAF (73 aa)) form a Gelsolin-like repeat.

The protein belongs to the SEC23/SEC24 family. SEC24 subfamily. COPII is composed of at least five proteins: the Sec23/24 complex, the Sec13/31 complex and Sar1. Interacts with TMED2. Interacts (as part of the Sec23/24 complex) with SEC22B; recruits SEC22B into COPII-coated vesicles for its transport from the endoplasmic reticulum to the Golgi. Interacts with STING1; promoting STING1 translocation to COPII vesicles in a STEEP1-dependent manner. Interacts with TMEM39A. Interacts with SACM1L; this interaction is reduced in the absence of TMEM39A. Interacts with kinase FAM20C; transport of FAM20C from the endoplasmic reticulum to the Golgi is likely to be mediated by COPII vesicles.

The protein resides in the cytoplasmic vesicle. Its subcellular location is the COPII-coated vesicle membrane. The protein localises to the endoplasmic reticulum membrane. It localises to the cytoplasm. It is found in the cytosol. Component of the coat protein complex II (COPII) which promotes the formation of transport vesicles from the endoplasmic reticulum (ER). The coat has two main functions, the physical deformation of the endoplasmic reticulum membrane into vesicles and the selection of cargo molecules for their transport to the Golgi complex. Plays a central role in cargo selection within the COPII complex and together with SEC24B may have a different specificity compared to SEC24C and SEC24D. May package preferentially cargos with cytoplasmic DxE or LxxLE motifs and may also recognize conformational epitopes. The chain is Protein transport protein Sec24A from Bos taurus (Bovine).